Here is a 213-residue protein sequence, read N- to C-terminus: Bacteriochlorophyll synthase 23 kDa chain (213 aa).

Its pathway is porphyrin-containing compound metabolism; bacteriochlorophyll biosynthesis (light-independent). The sequence is that of Bacteriochlorophyll synthase 23 kDa chain (bchJ) from Rhodobacter capsulatus (strain ATCC BAA-309 / NBRC 16581 / SB1003).